The following is a 226-amino-acid chain: Enolase-phosphatase E1 (226 aa).

2 residues coordinate Mg(2+): aspartate 9 and glutamate 11. Substrate is bound by residues 115 to 116 (SS) and lysine 160. Mg(2+) is bound at residue aspartate 185.

Belongs to the HAD-like hydrolase superfamily. MasA/MtnC family. Monomer. It depends on Mg(2+) as a cofactor.

The protein resides in the cytoplasm. The protein localises to the nucleus. It catalyses the reaction 5-methylsulfanyl-2,3-dioxopentyl phosphate + H2O = 1,2-dihydroxy-5-(methylsulfanyl)pent-1-en-3-one + phosphate. Its pathway is amino-acid biosynthesis; L-methionine biosynthesis via salvage pathway; L-methionine from S-methyl-5-thio-alpha-D-ribose 1-phosphate: step 3/6. It functions in the pathway amino-acid biosynthesis; L-methionine biosynthesis via salvage pathway; L-methionine from S-methyl-5-thio-alpha-D-ribose 1-phosphate: step 4/6. Bifunctional enzyme that catalyzes the enolization of 2,3-diketo-5-methylthiopentyl-1-phosphate (DK-MTP-1-P) into the intermediate 2-hydroxy-3-keto-5-methylthiopentenyl-1-phosphate (HK-MTPenyl-1-P), which is then dephosphorylated to form the acireductone 1,2-dihydroxy-3-keto-5-methylthiopentene (DHK-MTPene). In Zygosaccharomyces rouxii (strain ATCC 2623 / CBS 732 / NBRC 1130 / NCYC 568 / NRRL Y-229), this protein is Enolase-phosphatase E1.